Reading from the N-terminus, the 219-residue chain is Thiopurine S-methyltransferase (219 aa).

S-adenosyl-L-methionine is bound by residues Trp10, Leu45, Glu66, and Arg123.

The protein belongs to the class I-like SAM-binding methyltransferase superfamily. TPMT family.

Its subcellular location is the cytoplasm. It carries out the reaction S-adenosyl-L-methionine + a thiopurine = S-adenosyl-L-homocysteine + a thiopurine S-methylether.. This is Thiopurine S-methyltransferase from Bordetella pertussis (strain Tohama I / ATCC BAA-589 / NCTC 13251).